Here is a 526-residue protein sequence, read N- to C-terminus: Probable DNA ligase (526 aa).

Glutamate 228 contributes to the ATP binding site. Lysine 230 acts as the N6-AMP-lysine intermediate in catalysis. Residues arginine 235, arginine 250, glutamate 279, phenylalanine 319, arginine 391, and lysine 397 each contribute to the ATP site.

It belongs to the ATP-dependent DNA ligase family. Mg(2+) is required as a cofactor.

It carries out the reaction ATP + (deoxyribonucleotide)n-3'-hydroxyl + 5'-phospho-(deoxyribonucleotide)m = (deoxyribonucleotide)n+m + AMP + diphosphate.. Functionally, DNA ligase that seals nicks in double-stranded DNA during DNA replication, DNA recombination and DNA repair. This is Probable DNA ligase from Mycobacterium avium (strain 104).